A 257-amino-acid chain; its full sequence is Imidazole glycerol phosphate synthase subunit HisF (257 aa).

Active-site residues include D11 and D130.

Belongs to the HisA/HisF family. Heterodimer of HisH and HisF.

The protein localises to the cytoplasm. It catalyses the reaction 5-[(5-phospho-1-deoxy-D-ribulos-1-ylimino)methylamino]-1-(5-phospho-beta-D-ribosyl)imidazole-4-carboxamide + L-glutamine = D-erythro-1-(imidazol-4-yl)glycerol 3-phosphate + 5-amino-1-(5-phospho-beta-D-ribosyl)imidazole-4-carboxamide + L-glutamate + H(+). It functions in the pathway amino-acid biosynthesis; L-histidine biosynthesis; L-histidine from 5-phospho-alpha-D-ribose 1-diphosphate: step 5/9. Its function is as follows. IGPS catalyzes the conversion of PRFAR and glutamine to IGP, AICAR and glutamate. The HisF subunit catalyzes the cyclization activity that produces IGP and AICAR from PRFAR using the ammonia provided by the HisH subunit. The chain is Imidazole glycerol phosphate synthase subunit HisF from Aeromonas salmonicida (strain A449).